The following is a 113-amino-acid chain: Putative insulin-like growth factor 2-associated protein (113 aa).

In terms of tissue distribution, expressed in fetal and adult liver.

The sequence is that of Putative insulin-like growth factor 2-associated protein from Homo sapiens (Human).